The chain runs to 464 residues: Hepatocyte nuclear factor 4-alpha (464 aa).

Positions 57-132 (NSLCAICGDR…AGMKKEAVQN (76 aa)) form a DNA-binding region, nuclear receptor. 2 consecutive NR C4-type zinc fingers follow at residues 60-80 (CAIC…CDGC) and 96-120 (CRFS…LKKC). The NR LBD domain occupies 147-376 (SSLPSINVLI…NLLQEMLLGG (230 aa)). The 9aaTAD signature appears at 367–375 (NLLQEMLLG). Positions 410–421 (SQLHNGQMSTPE) are enriched in polar residues. The tract at residues 410 to 433 (SQLHNGQMSTPETPQPSPPAGSGA) is disordered.

The protein belongs to the nuclear hormone receptor family. NR2 subfamily. Homodimerization is required for HNF4-alpha to bind to its recognition site. Expressed in liver and kidney.

It is found in the nucleus. In terms of biological role, transcriptional regulator; binds and activates the promoter for the HNF1-alpha gene. Potential initiator of a transcriptional cascade within a subset of cells committed to a specific developmental program. Could be a determinant for asymmetry in early development. May play a role in the regulation of the circadian clock. This chain is Hepatocyte nuclear factor 4-alpha (hnf4a), found in Xenopus laevis (African clawed frog).